The chain runs to 91 residues: DNA-binding protein HU (91 aa).

Belongs to the bacterial histone-like protein family. In terms of assembly, homodimer.

Functionally, histone-like DNA-binding protein which is capable of wrapping DNA to stabilize it, and thus to prevent its denaturation under extreme environmental conditions. This chain is DNA-binding protein HU (hup), found in Lactococcus lactis subsp. lactis (strain IL1403) (Streptococcus lactis).